The primary structure comprises 231 residues: Large ribosomal subunit protein uL1 (231 aa).

It belongs to the universal ribosomal protein uL1 family. In terms of assembly, part of the 50S ribosomal subunit.

In terms of biological role, binds directly to 23S rRNA. The L1 stalk is quite mobile in the ribosome, and is involved in E site tRNA release. Functionally, protein L1 is also a translational repressor protein, it controls the translation of the L11 operon by binding to its mRNA. This is Large ribosomal subunit protein uL1 from Ruthia magnifica subsp. Calyptogena magnifica.